The chain runs to 137 residues: Large ribosomal subunit protein uL16 (137 aa).

Residues 1–17 show a composition bias toward basic residues; sequence MLSPKRVKFRKRQRGRL. The tract at residues 1 to 24 is disordered; the sequence is MLSPKRVKFRKRQRGRLKGTDERG.

It belongs to the universal ribosomal protein uL16 family. As to quaternary structure, part of the 50S ribosomal subunit.

Binds 23S rRNA and is also seen to make contacts with the A and possibly P site tRNAs. This chain is Large ribosomal subunit protein uL16, found in Leptospira borgpetersenii serovar Hardjo-bovis (strain JB197).